The sequence spans 344 residues: tRNA N6-adenosine threonylcarbamoyltransferase (344 aa).

His-112 and His-116 together coordinate Fe cation. Residues 134–138 (LASGG), Asp-167, Gly-180, and Asn-280 contribute to the substrate site. Asp-308 is a Fe cation binding site.

Belongs to the KAE1 / TsaD family. Fe(2+) is required as a cofactor.

It localises to the cytoplasm. The enzyme catalyses L-threonylcarbamoyladenylate + adenosine(37) in tRNA = N(6)-L-threonylcarbamoyladenosine(37) in tRNA + AMP + H(+). Functionally, required for the formation of a threonylcarbamoyl group on adenosine at position 37 (t(6)A37) in tRNAs that read codons beginning with adenine. Is involved in the transfer of the threonylcarbamoyl moiety of threonylcarbamoyl-AMP (TC-AMP) to the N6 group of A37, together with TsaE and TsaB. TsaD likely plays a direct catalytic role in this reaction. This chain is tRNA N6-adenosine threonylcarbamoyltransferase, found in Rickettsia massiliae (strain Mtu5).